Consider the following 456-residue polypeptide: Phospholipase A1 member A (456 aa).

The first 25 residues, 1–25 (MPPGPWESCFWVGGLLLWLSVGSSG), serve as a signal peptide directing secretion. The active-site Nucleophile is Ser-166. Residue Asp-190 is the Charge relay system of the active site. An intrachain disulfide couples Cys-245 to Cys-258. His-260 functions as the Charge relay system in the catalytic mechanism. Disulfide bonds link Cys-282–Cys-293 and Cys-296–Cys-304. Asn-365 is a glycosylation site (N-linked (GlcNAc...) asparagine).

The protein belongs to the AB hydrolase superfamily. Lipase family.

It localises to the secreted. It carries out the reaction a 1,2-diacyl-sn-glycero-3-phospho-L-serine + H2O = a 2-acyl-sn-glycero-3-phospho-L-serine + a fatty acid + H(+). The enzyme catalyses 1,2-di-(9Z)-octadecenoyl-sn-glycero-3-phospho-L-serine + H2O = 2-(9Z-octadecenoyl)-sn-glycero-3-phospho-L-serine + (9Z)-octadecenoate + H(+). It catalyses the reaction 1-hexadecanoyl-2-(5Z,8Z,11Z,14Z-eicosatetraenoyl)-sn-glycero-3-phospho-L-serine + H2O = 2-(5Z,8Z,11Z,14Z)-eicosatetraenoyl-sn-glycero-3-phospho-L-serine + hexadecanoate + H(+). The catalysed reaction is a 1-acyl-sn-glycero-3-phospho-L-serine + H2O = sn-glycero-3-phospho-L-serine + a fatty acid + H(+). It carries out the reaction 1-(9Z-octadecenoyl)-sn-glycero-3-phospho-L-serine + H2O = sn-glycero-3-phospho-L-serine + (9Z)-octadecenoate + H(+). Its function is as follows. Hydrolyzes the ester bond of the acyl group attached at the sn-1 position of phosphatidylserines (phospholipase A1 activity) and 1-acyl-2-lysophosphatidylserines (lysophospholipase activity) in the pathway of phosphatidylserines acyl chain remodeling. Cleaves phosphatidylserines exposed on the outer leaflet of the plasma membrane of apoptotic cells producing 2-acyl-1-lysophosphatidylserines, which in turn enhance mast cell activation and histamine production. Has no activity toward other glycerophospholipids including phosphatidylcholines, phosphatidylethanolamines, phosphatidic acids or phosphatidylinositols, or glycerolipids such as triolein. This is Phospholipase A1 member A (PLA1A) from Pongo abelii (Sumatran orangutan).